We begin with the raw amino-acid sequence, 342 residues long: Probable allantoicase (342 aa).

The protein belongs to the allantoicase family.

It catalyses the reaction allantoate + H2O = (S)-ureidoglycolate + urea. Its pathway is nitrogen metabolism; (S)-allantoin degradation; (S)-ureidoglycolate from allantoate (aminidohydrolase route): step 1/1. Functionally, utilization of purines as secondary nitrogen sources, when primary sources are limiting. This is Probable allantoicase from Schizosaccharomyces pombe (strain 972 / ATCC 24843) (Fission yeast).